Reading from the N-terminus, the 416-residue chain is Queuine tRNA-ribosyltransferase accessory subunit 2 (416 aa).

Zn(2+) contacts are provided by Cys-323, Cys-325, Cys-328, and His-354.

This sequence belongs to the queuine tRNA-ribosyltransferase family. QTRT2 subfamily. In terms of assembly, heterodimer of a catalytic subunit and an accessory subunit. Zn(2+) serves as cofactor.

The protein resides in the cytoplasm. Its function is as follows. Non-catalytic subunit of the queuine tRNA-ribosyltransferase (TGT) that catalyzes the base-exchange of a guanine (G) residue with queuine (Q) at position 34 (anticodon wobble position) in tRNAs with GU(N) anticodons (tRNA-Asp, -Asn, -His and -Tyr), resulting in the hypermodified nucleoside queuosine (7-(((4,5-cis-dihydroxy-2-cyclopenten-1-yl)amino)methyl)-7-deazaguanosine). The polypeptide is Queuine tRNA-ribosyltransferase accessory subunit 2 (Drosophila mojavensis (Fruit fly)).